A 113-amino-acid chain; its full sequence is Small ribosomal subunit protein bS6 (113 aa).

Belongs to the bacterial ribosomal protein bS6 family.

In terms of biological role, binds together with bS18 to 16S ribosomal RNA. This Synechocystis sp. (strain ATCC 27184 / PCC 6803 / Kazusa) protein is Small ribosomal subunit protein bS6 (rpsF).